Here is a 122-residue protein sequence, read N- to C-terminus: Large ribosomal subunit protein uL18 (122 aa).

Residues 1–27 (MSNLSRKQQTQKRHRRLRRHLNGTAQR) are disordered. Residues 9-21 (QTQKRHRRLRRHL) show a composition bias toward basic residues.

The protein belongs to the universal ribosomal protein uL18 family. In terms of assembly, part of the 50S ribosomal subunit; part of the 5S rRNA/L5/L18/L25 subcomplex. Contacts the 5S and 23S rRNAs.

This is one of the proteins that bind and probably mediate the attachment of the 5S RNA into the large ribosomal subunit, where it forms part of the central protuberance. This Prochlorococcus marinus (strain MIT 9303) protein is Large ribosomal subunit protein uL18.